The following is a 160-amino-acid chain: Nucleotide-binding protein BAV0791 (160 aa).

This sequence belongs to the YajQ family.

In terms of biological role, nucleotide-binding protein. This chain is Nucleotide-binding protein BAV0791, found in Bordetella avium (strain 197N).